A 204-amino-acid chain; its full sequence is MNIFIVVLLCLTGVAIAEQCGRQAGGKLCPNNLCCSQWGWCGSTDEYCSPDHNCQSNCKDSGEGVGGGSASNVLATYHLYNSQDHGWDLNAASAYCSTWDANKPYSWRSKYGWTAFCGPVGAHGQSSCGKCLSVTNTGTGAKTTVRIVDQCSNGGLDLDVNVFRQLDTDGKGYERGHITVNYQFVDCGDSFNPLFSVMKSSVIN.

The first 17 residues, 1 to 17 (MNIFIVVLLCLTGVAIA), serve as a signal peptide directing secretion. Positions 18 to 60 (EQCGRQAGGKLCPNNLCCSQWGWCGSTDEYCSPDHNCQSNCKD) constitute a Chitin-binding type-1 domain. Disulfide bonds link Cys20–Cys35, Cys29–Cys41, Cys34–Cys48, and Cys54–Cys58. Residues 61–66 (SGEGVG) constitute a propeptide that is removed on maturation. The Barwin domain occupies 68-189 (GSASNVLATY…VNYQFVDCGD (122 aa)). Intrachain disulfides connect Cys96–Cys128, Cys117–Cys151, and Cys131–Cys187.

In terms of processing, proteolytically processed to yield the two chains of the mature protein. Laticifer.

Functionally, N-acetyl-D-glucosamine / N-acetyl-D-neuraminic acid binding lectin. Can inhibit fungal growth. The polypeptide is Pro-hevein (HEV1) (Hevea brasiliensis (Para rubber tree)).